Here is a 503-residue protein sequence, read N- to C-terminus: ATP synthase subunit alpha (503 aa).

Residue 169 to 176 participates in ATP binding; it reads GDRSTGKT.

The protein belongs to the ATPase alpha/beta chains family. As to quaternary structure, F-type ATPases have 2 components, CF(1) - the catalytic core - and CF(0) - the membrane proton channel. CF(1) has five subunits: alpha(3), beta(3), gamma(1), delta(1), epsilon(1). CF(0) has three main subunits: a(1), b(2) and c(9-12). The alpha and beta chains form an alternating ring which encloses part of the gamma chain. CF(1) is attached to CF(0) by a central stalk formed by the gamma and epsilon chains, while a peripheral stalk is formed by the delta and b chains.

It localises to the cell membrane. The enzyme catalyses ATP + H2O + 4 H(+)(in) = ADP + phosphate + 5 H(+)(out). Functionally, produces ATP from ADP in the presence of a proton gradient across the membrane. The alpha chain is a regulatory subunit. The chain is ATP synthase subunit alpha from Dehalococcoides mccartyi (strain ATCC BAA-2266 / KCTC 15142 / 195) (Dehalococcoides ethenogenes (strain 195)).